Consider the following 488-residue polypeptide: Replication-associated protein (488 aa).

Residues 462 to 488 (PRPRQMQRSATEHNLFQYARSGRDPTS) are disordered.

The protein localises to the host nucleus. Its function is as follows. Plays an essential for the replication of viral DNA. Presumably cleaves viral genomic dsRNA replicative form to initiate rolling circle replication. In Chaetoceros diatodnavirus 1 (Chaetoceros setoense DNA virus), this protein is Replication-associated protein.